A 535-amino-acid polypeptide reads, in one-letter code: Sucrose transport protein SUT5 (535 aa).

The Cytoplasmic portion of the chain corresponds to 1–53 (MEEGRRGDREGKSAAGWTALSTTKTTLEEKRRLQANGSVGGDAGTSGFRRIVR). A helical membrane pass occupies residues 54-74 (LFFACMVAGGIQYGWALQLSL). Residues 75–87 (LSPYSQTLGISHS) lie on the Extracellular side of the membrane. A helical membrane pass occupies residues 88–108 (YVSLTWICGPIAGFVVQPIVG). At 109–122 (YYSDRCTMKMGRRR) the chain is on the cytoplasmic side. The chain crosses the membrane as a helical span at residues 123–143 (PFILVGCLIICISVMIIGFSA). Residues 144–163 (DIGRHLGDTKEHCSTYTGPR) are Extracellular-facing. The helical transmembrane segment at 164-184 (WSAAMVYIVGFWFLDFANNTV) threads the bilayer. Residues 185 to 203 (QGPARAMMADLSAGHHGPN) lie on the Cytoplasmic side of the membrane. Residues 204–224 (VGQSIFSLWMAIGSVLGYLSG) form a helical membrane-spanning segment. Over 225-249 (ANGKWHEWFPWLKTAACCDACANLK) the chain is Extracellular. Residues 250-270 (GAFFTAVLLIVVSMTVTMYLA) form a helical membrane-spanning segment. Topologically, residues 271 to 302 (DEMPLDKQDVDTSGGGGCAVFVDLFKSLRNLP) are cytoplasmic. The chain crosses the membrane as a helical span at residues 303 to 323 (PAMFKVLAVTAVTWLSWFPFI). At 324 to 354 (QYNTDWMGREIYHGEPQGTAAKADVYDAGVR) the chain is on the extracellular side. A helical transmembrane segment spans residues 355–375 (EGAMGLLFCSVALGVTSFVIP). The Cytoplasmic portion of the chain corresponds to 376 to 384 (KLCRRLTSK). A helical transmembrane segment spans residues 385-405 (VVWSISNFLVFALMAVMVAVG). Over 406 to 429 (MVSMRGYRPSLAAGLTGPDPTLKA) the chain is Extracellular. Residues 430 to 450 (VALVVFALIGIPQAVLFSVPW) form a helical membrane-spanning segment. Residues 451 to 465 (AVASEVTAEEGGGQG) lie on the Cytoplasmic side of the membrane. The helical transmembrane segment at 466-486 (LAIGVLNIAIVVPQLVIALTA) threads the bilayer. Residues 487 to 498 (GPIDGAFNKGNT) are Extracellular-facing. The helical transmembrane segment at 499-519 (PAFGIGGAFAFICGVLALIWL) threads the bilayer. The Cytoplasmic segment spans residues 520–535 (PKTRGVSNAAVVAGGH).

Belongs to the glycoside-pentoside-hexuronide (GPH) cation symporter transporter (TC 2.A.2.4) family. In terms of assembly, homodimer. As to expression, widely expressed. Highest expression in sink leaves and lowest in germinating seeds.

It is found in the cell membrane. It functions in the pathway glycan biosynthesis; sucrose metabolism. Functionally, responsible for the transport of sucrose into the cell, with the concomitant uptake of protons (symport system). Can also transport other glucosides such as maltose, arbutin, salicin, helicin, alpha-phenylglucoside and beta-phenylglucoside. This Oryza sativa subsp. japonica (Rice) protein is Sucrose transport protein SUT5 (SUT5).